Consider the following 345-residue polypeptide: CRISPR-associated endonuclease Cas1 1 (345 aa).

3 residues coordinate a divalent metal cation: E168, H239, and E254.

This sequence belongs to the CRISPR-associated endonuclease Cas1 family. Forms a heterotetramer with a Cas2 homodimer. Homodimer. Requires a divalent metal cation as cofactor.

In terms of biological role, CRISPR (clustered regularly interspaced short palindromic repeat), is an adaptive immune system that provides protection against mobile genetic elements (viruses, transposable elements and conjugative plasmids). CRISPR clusters contain sequences complementary to antecedent mobile elements and target invading nucleic acids. CRISPR clusters are transcribed and processed into CRISPR RNA (crRNA). Involved in the integration of spacer DNA into the CRISPR cassette. Acts as a dsDNA and ssRNA nuclease, binds to linear and circular dsDNA and linear ssRNA and ssDNA. The sequence is that of CRISPR-associated endonuclease Cas1 1 from Archaeoglobus fulgidus (strain ATCC 49558 / DSM 4304 / JCM 9628 / NBRC 100126 / VC-16).